The following is a 1260-amino-acid chain: Kinesin-like protein KIN-14E (1260 aa).

One can recognise a MyTH4 domain in the interval 115-274 (FQKDPIPTSL…PGREEIEALL (160 aa)). Residues 279–593 (LTTIVFFLDE…HINDVMLRRY (315 aa)) enclose the FERM domain. 2 coiled-coil regions span residues 615-676 (QNFE…LLEV) and 753-853 (SKRL…TAAI). The Kinesin motor domain maps to 888–1209 (KIRVYCRIRP…LLYASRVRTI (322 aa)). 972-977 (GSGKTF) contacts ATP. Positions 1217 to 1239 (ISSKEMVRLKKLVAYWKEQAGKK) are calmodulin-binding. The interval 1221-1260 (EMVRLKKLVAYWKEQAGKKGEEEDLVDIEEDRTRKDEADS) is homodimerization domain. Residues 1236-1260 (AGKKGEEEDLVDIEEDRTRKDEADS) form a disordered region. A compositionally biased stretch (basic and acidic residues) spans 1251–1260 (DRTRKDEADS).

The protein belongs to the TRAFAC class myosin-kinesin ATPase superfamily. Kinesin family. KIN-14 subfamily. As to quaternary structure, homodimer (via C-terminus). Binds microtubules via its N-terminus containing the MyTH4 domain and binds F-actin via its FERM domain. Interacts with KIPK1. Interacts with KIPK2. Interacts with AN. Interacts with AIR9. Interacts (via C-terminus) with KIC, CAM2, CAM4 and CAM6. KIC and calmodulin show competitive binding to KCBP. Binding to calmodulin inhibits microtubule binding activity. Binding to KIC inhibits microtubule binding activity and microtubule-stimulated ATPase activity. In terms of tissue distribution, widely expressed with the highest levels in flowers. Strongly expressed in the root tip. Highly detected in the branch apex of the trichome.

It localises to the cytoplasm. It is found in the cell cortex. Its subcellular location is the cytoskeleton. The protein localises to the spindle. The protein resides in the phragmoplast. In terms of biological role, minus-end microtubule-dependent motor protein involved in the regulation of cell division and trichome morphogenesis through microtubules bundling. Possesses basal and microtubule-stimulated ATPase activities. Acts as a hub that brings together microtubules and actin filaments to modulate the cytoskeleton during trichome formation and morphogenesis. Could be involved in the negative regulation of root growth. The sequence is that of Kinesin-like protein KIN-14E from Arabidopsis thaliana (Mouse-ear cress).